The chain runs to 577 residues: Arginine--tRNA ligase (577 aa).

Positions 122–132 match the 'HIGH' region motif; sequence PNVAKEMHVGH.

This sequence belongs to the class-I aminoacyl-tRNA synthetase family. Monomer.

It is found in the cytoplasm. It catalyses the reaction tRNA(Arg) + L-arginine + ATP = L-arginyl-tRNA(Arg) + AMP + diphosphate. This chain is Arginine--tRNA ligase, found in Salmonella agona (strain SL483).